The following is a 28-amino-acid chain: Cyclotide vodo I3 (28 aa).

3 disulfide bridges follow: C4-C18, C8-C20, and C13-C25.

Post-translationally, this is a cyclic peptide. In terms of processing, contains 3 disulfide bonds.

In terms of biological role, probably participates in a plant defense mechanism. The sequence is that of Cyclotide vodo I3 from Viola odorata (Sweet violet).